An 82-amino-acid chain; its full sequence is MKTSVVFVIAGLALLSVVCYASELKEQSSVNEVLSTIFHFEQPEERGCLEFWWKCNPNDDKCCRPKLKCSKLFKLCNFSFGK.

The first 21 residues, 1 to 21, serve as a signal peptide directing secretion; sequence MKTSVVFVIAGLALLSVVCYA. Residues 22 to 46 constitute a propeptide that is removed on maturation; sequence SELKEQSSVNEVLSTIFHFEQPEER. Intrachain disulfides connect Cys-48-Cys-63, Cys-55-Cys-69, and Cys-62-Cys-76. Position 80 is a phenylalanine amide (Phe-80).

This sequence belongs to the neurotoxin 10 (Hwtx-1) family. 52 (MTx4) subfamily. Expressed by the venom gland.

The protein resides in the secreted. Functionally, this cationic hydrophobic peptide acts on a lot of different channels and has an antimicrobial activity. It blocks mechanosensitive ion channels (also named stretch-activated channels or SACs), without having effect on whole-cell voltage-sensitive currents. It also affects acetylcholine receptors (nAChRs) through interactions with membrane lipids by prolonging the closing time without affecting channel conductance or opening activity. It shows high affinity for lipid bilayers. It acts by partitioning into the membrane and perturbing the interface between the channel and the lipid bilayer without necessarily being in physical contact with the channel. It inhibits atrial fibrillation as well as the membrane motor of outer hair cells at low doses. It also binds to the voltage sensor of voltage-gated potassium channels from the archaebacterium Aeropyrum pernix (KvAP) without affecting channel gating. It also shows a low inhibition on a large spectra of sodium channels (Nav1.1/SCN1A, Nav1.2/SCN2A, Nav1.3/SCN3A, Nav1.4/SCN4A, Nav1.5/SCN5A, Nav1.6/SCN8A, Nav1.7/SCN9A) (IC(50)=7.4-14 uM), and potassium channels Kv11.1/KCNH2 and Kv11.2/KCNH6 (IC(50)=11 uM for both). It exhibits antimicrobial activities against the Gram-positive bacteria B.subtilis (MIC=0.5 uM), S.aureus (MIC=2-4 uM), and S.epidermidis (MIC=4-8 uM), and Gram-negative bacteria S.typhimurium (MIC=32.64 uM), P.aeruginosa (MIC=8-16 uM), and E.coli (MIC=8-16 uM). This Grammostola rosea (Chilean rose tarantula) protein is M-theraphotoxin-Gr1a.